A 227-amino-acid chain; its full sequence is [D-Ala2]-deltorphins (227 aa).

An N-terminal signal peptide occupies residues Met1–Ser20. Positions Val21–Met46 are excised as a propeptide. Residues Cys22–Met227 form a disordered region. Positions Glu30–Asn39 are enriched in acidic residues. Ala50 carries the D-alanine (Ala) modification. A propeptide spanning residues Asp57–Met75 is cleaved from the precursor. Acidic residues predominate over residues Asn62–Gly72. The span at Ser73–Pro87 shows a compositional bias: basic and acidic residues. Ala79 carries the D-alanine (Ala) modification. Residues Glu86–Met104 constitute a propeptide that is removed on maturation. A compositionally biased stretch (acidic residues) spans Glu88–His98. A compositionally biased stretch (basic and acidic residues) spans Glu99 to Ala108. Ala108 is subject to D-alanine (Ala). A Glycine amide modification is found at Gly113. Residues Glu115 to Met140 constitute a propeptide that is removed on maturation. Positions Glu124–His134 are enriched in acidic residues. Basic and acidic residues predominate over residues Glu135–Ala144. The residue at position 144 (Ala144) is a D-alanine (Ala). Residue Gly149 is modified to Glycine amide. Residues Glu151–Met176 constitute a propeptide that is removed on maturation. Residues Glu160–His170 show a composition bias toward acidic residues. Residues Glu171–Ala180 are compositionally biased toward basic and acidic residues. A D-alanine (Ala) modification is found at Ala180. A Glycine amide modification is found at Gly185. The propeptide occupies Glu187–Met212. A compositionally biased stretch (acidic residues) spans Glu196–His206. Residues Glu207–Ala216 are compositionally biased toward basic and acidic residues. At Ala216 the chain carries D-alanine (Ala). The residue at position 221 (Gly221) is a Glycine amide. A propeptide spanning residues Glu223 to Met227 is cleaved from the precursor.

The protein belongs to the frog skin active peptide (FSAP) family. Dermorphin subfamily. Expressed by the skin glands.

It localises to the secreted. Deltorphin is a heptapeptide with a very potent opiate-like activity. Has high affinity and selectivity for delta-type opioid receptors. The two dermorphin-like peptides have a similar affinity and selectivity for the mu opioid receptor as dermorphin. In Phyllomedusa bicolor (Two-colored leaf frog), this protein is [D-Ala2]-deltorphins.